Consider the following 145-residue polypeptide: 3-dehydroquinate dehydratase (145 aa).

The active-site Proton acceptor is Tyr-23. Asn-74, His-80, and Asp-87 together coordinate substrate. His-100 functions as the Proton donor in the catalytic mechanism. Substrate-binding positions include 101–102 and Arg-111; that span reads IS.

The protein belongs to the type-II 3-dehydroquinase family. In terms of assembly, homododecamer.

It catalyses the reaction 3-dehydroquinate = 3-dehydroshikimate + H2O. It participates in metabolic intermediate biosynthesis; chorismate biosynthesis; chorismate from D-erythrose 4-phosphate and phosphoenolpyruvate: step 3/7. Its function is as follows. Catalyzes a trans-dehydration via an enolate intermediate. The chain is 3-dehydroquinate dehydratase from Dictyoglomus turgidum (strain DSM 6724 / Z-1310).